A 126-amino-acid chain; its full sequence is Glycine cleavage system H protein (126 aa).

One can recognise a Lipoyl-binding domain in the interval 22–104 (KAYIGITSFA…YEQAWMIVVE (83 aa)). Residue Lys-63 is modified to N6-lipoyllysine.

The protein belongs to the GcvH family. The glycine cleavage system is composed of four proteins: P, T, L and H. (R)-lipoate is required as a cofactor.

Its function is as follows. The glycine cleavage system catalyzes the degradation of glycine. The H protein shuttles the methylamine group of glycine from the P protein to the T protein. Functionally, is also involved in protein lipoylation via its role as an octanoyl/lipoyl carrier protein intermediate. This chain is Glycine cleavage system H protein, found in Brevibacillus brevis (strain 47 / JCM 6285 / NBRC 100599).